The chain runs to 349 residues: Isopentenyl-diphosphate delta-isomerase (349 aa).

Position 6 to 7 (6 to 7) interacts with substrate; it reads RK. FMN is bound by residues 62 to 64, Ser93, and Asn122; that span reads AMT. Gln152 contributes to the substrate binding site. Residue Glu153 participates in Mg(2+) binding. FMN is bound by residues Lys184, Thr214, 258-259, and 280-281; these read GG and AG.

This sequence belongs to the IPP isomerase type 2 family. In terms of assembly, homooctamer. Dimer of tetramers. The cofactor is FMN. NADPH is required as a cofactor. Requires Mg(2+) as cofactor.

Its subcellular location is the cytoplasm. It catalyses the reaction isopentenyl diphosphate = dimethylallyl diphosphate. Functionally, involved in the biosynthesis of isoprenoids. Catalyzes the 1,3-allylic rearrangement of the homoallylic substrate isopentenyl (IPP) to its allylic isomer, dimethylallyl diphosphate (DMAPP). This Bacillus cereus (strain 03BB102) protein is Isopentenyl-diphosphate delta-isomerase.